A 240-amino-acid polypeptide reads, in one-letter code: tRNA (guanine-N(7)-)-methyltransferase (240 aa).

Residues 1-20 (MTESHDTPITPDGEARPHRR) are disordered. 4 residues coordinate S-adenosyl-L-methionine: Glu70, Glu95, Asp122, and Asp145. Asp145 is a catalytic residue. Substrate contacts are provided by residues Lys149, Asp181, and 218-221 (TKFE).

Belongs to the class I-like SAM-binding methyltransferase superfamily. TrmB family.

It carries out the reaction guanosine(46) in tRNA + S-adenosyl-L-methionine = N(7)-methylguanosine(46) in tRNA + S-adenosyl-L-homocysteine. It participates in tRNA modification; N(7)-methylguanine-tRNA biosynthesis. Catalyzes the formation of N(7)-methylguanine at position 46 (m7G46) in tRNA. In Pseudomonas putida (strain ATCC 47054 / DSM 6125 / CFBP 8728 / NCIMB 11950 / KT2440), this protein is tRNA (guanine-N(7)-)-methyltransferase.